We begin with the raw amino-acid sequence, 224 residues long: Urease accessory protein UreF (224 aa).

The protein belongs to the UreF family. In terms of assembly, ureD, UreF and UreG form a complex that acts as a GTP-hydrolysis-dependent molecular chaperone, activating the urease apoprotein by helping to assemble the nickel containing metallocenter of UreC. The UreE protein probably delivers the nickel.

The protein resides in the cytoplasm. Its function is as follows. Required for maturation of urease via the functional incorporation of the urease nickel metallocenter. The polypeptide is Urease accessory protein UreF (Pseudomonas fluorescens (strain ATCC BAA-477 / NRRL B-23932 / Pf-5)).